The chain runs to 93 residues: Ferredoxin-2 (93 aa).

The 2Fe-2S ferredoxin-type domain maps to Y2–D91. 4 residues coordinate [2Fe-2S] cluster: C37, C42, C45, and C75.

Belongs to the 2Fe2S plant-type ferredoxin family. It depends on [2Fe-2S] cluster as a cofactor.

The protein resides in the plastid. Its subcellular location is the chloroplast. In terms of biological role, ferredoxins are iron-sulfur proteins that transfer electrons in a wide variety of metabolic reactions. This is Ferredoxin-2 from Equisetum telmateia (Great horsetail).